Reading from the N-terminus, the 1843-residue chain is Protein TIC 214 (1843 aa).

6 helical membrane-spanning segments follow: residues 18 to 38, 64 to 84, 87 to 107, 124 to 144, 172 to 192, and 217 to 237; these read IINS…FSIG, FITG…HLAL, PHTI…WNNH, LSIQ…HFIL, VGWL…LFWI, and IFSI…PSPI. 5 disordered regions span residues 244–281, 557–576, 582–647, 724–744, and 1527–1586; these read ETSK…AAEK, EEIE…SRKA, FTDN…DEVA, NSEE…RQEN, and SLEL…KKKK. Acidic residues predominate over residues 251–264; sequence REESEEETDVEIET. Residues 269 to 281 show a composition bias toward basic and acidic residues; sequence KGTKQEQEGAAEK. Over residues 590–639 the composition is skewed to low complexity; sequence NTPTSTTETTSTAETTSTTETTSTTKNTSTTKNTSTTETTSTTENENTSN. Basic and acidic residues-rich tracts occupy residues 730-744 and 1527-1540; these read TKEK…RQEN and SLEL…KKPA. Residues 1543–1562 are compositionally biased toward polar residues; the sequence is NIGSDTQKQGNPGSDPSTQQ. Residues 1563–1580 show a composition bias toward basic and acidic residues; the sequence is KDIKKNVKEDYDGRSDIQ.

Belongs to the TIC214 family. Part of the Tic complex.

It is found in the plastid. The protein localises to the chloroplast inner membrane. Its function is as follows. Involved in protein precursor import into chloroplasts. May be part of an intermediate translocation complex acting as a protein-conducting channel at the inner envelope. In Nandina domestica (Heavenly bamboo), this protein is Protein TIC 214.